A 326-amino-acid chain; its full sequence is Porin-like protein H (326 aa).

The signal sequence occupies residues 1 to 19; the sequence is MKKTLVALAILTAAGSANA.

The protein belongs to the Gram-negative porin family. As to quaternary structure, oligomer.

It is found in the cell outer membrane. Forms pores that allow passive diffusion of small molecules across the outer membrane. The chain is Porin-like protein H (ompH) from Photobacterium profundum (strain SS9).